Here is a 20-residue protein sequence, read N- to C-terminus: Cytochrome c oxidase subunit 8B, mitochondrial (20 aa).

A disordered region spans residues 1–20 (LSGKPAKXHLSVGEQAIAMT).

Belongs to the cytochrome c oxidase VIII family. Component of the cytochrome c oxidase (complex IV, CIV), a multisubunit enzyme composed of 14 subunits. The complex is composed of a catalytic core of 3 subunits MT-CO1, MT-CO2 and MT-CO3, encoded in the mitochondrial DNA, and 11 supernumerary subunits COX4I, COX5A, COX5B, COX6A, COX6B, COX6C, COX7A, COX7B, COX7C, COX8 and NDUFA4, which are encoded in the nuclear genome. The complex exists as a monomer or a dimer and forms supercomplexes (SCs) in the inner mitochondrial membrane with NADH-ubiquinone oxidoreductase (complex I, CI) and ubiquinol-cytochrome c oxidoreductase (cytochrome b-c1 complex, complex III, CIII), resulting in different assemblies (supercomplex SCI(1)III(2)IV(1) and megacomplex MCI(2)III(2)IV(2)).

The protein localises to the mitochondrion inner membrane. It functions in the pathway energy metabolism; oxidative phosphorylation. Functionally, component of the cytochrome c oxidase, the last enzyme in the mitochondrial electron transport chain which drives oxidative phosphorylation. The respiratory chain contains 3 multisubunit complexes succinate dehydrogenase (complex II, CII), ubiquinol-cytochrome c oxidoreductase (cytochrome b-c1 complex, complex III, CIII) and cytochrome c oxidase (complex IV, CIV), that cooperate to transfer electrons derived from NADH and succinate to molecular oxygen, creating an electrochemical gradient over the inner membrane that drives transmembrane transport and the ATP synthase. Cytochrome c oxidase is the component of the respiratory chain that catalyzes the reduction of oxygen to water. Electrons originating from reduced cytochrome c in the intermembrane space (IMS) are transferred via the dinuclear copper A center (CU(A)) of subunit 2 and heme A of subunit 1 to the active site in subunit 1, a binuclear center (BNC) formed by heme A3 and copper B (CU(B)). The BNC reduces molecular oxygen to 2 water molecules using 4 electrons from cytochrome c in the IMS and 4 protons from the mitochondrial matrix. The protein is Cytochrome c oxidase subunit 8B, mitochondrial of Oncorhynchus mykiss (Rainbow trout).